The chain runs to 590 residues: 4-oxocyclohex-2-ene-1-carboxylate 5-dehydrogenase (590 aa).

It belongs to the FAD-dependent oxidoreductase 2 family. As to quaternary structure, forms multimers. Requires FAD as cofactor.

It carries out the reaction 4-oxocyclohex-2-ene-1-carboxylate + NAD(+) = 4-oxocyclohexa-2,5-diene-1-carboxylate + NADH + H(+). Its function is as follows. Desaturase involved in a cyclohexanecarboxylate (CHCA) degradation pathway. Probably catalyzes the conversion of 4-oxocyclohexenecarboxylate to 4-oxocyclohex-2,5-dienecarboxylate, which is spontaneously isomerized to 4-hydroxybenzoate (4-HBA). The protein is 4-oxocyclohex-2-ene-1-carboxylate 5-dehydrogenase of Sinomonas cyclohexanicum (Corynebacterium cyclohexanicum).